A 328-amino-acid chain; its full sequence is Malate dehydrogenase (328 aa).

12 to 18 (GAAGQIA) is an NAD(+) binding site. The substrate site is built by R93 and R99. Residues N106, Q113, and 130-132 (VGN) each bind NAD(+). Substrate contacts are provided by N132 and R163. H188 functions as the Proton acceptor in the catalytic mechanism.

The protein belongs to the LDH/MDH superfamily. MDH type 2 family.

The catalysed reaction is (S)-malate + NAD(+) = oxaloacetate + NADH + H(+). Catalyzes the reversible oxidation of malate to oxaloacetate. The protein is Malate dehydrogenase of Burkholderia cenocepacia (strain HI2424).